A 164-amino-acid polypeptide reads, in one-letter code: Phosphopantetheine adenylyltransferase (164 aa).

Ser9 lines the substrate pocket. ATP is bound by residues Ser9–Phe10 and His17. Lys41, Ala78, and Arg92 together coordinate substrate. Residues Gly93–Arg95, Glu103, and Ser128–Thr134 each bind ATP.

Belongs to the bacterial CoaD family. As to quaternary structure, homohexamer. Requires Mg(2+) as cofactor.

It localises to the cytoplasm. The enzyme catalyses (R)-4'-phosphopantetheine + ATP + H(+) = 3'-dephospho-CoA + diphosphate. It participates in cofactor biosynthesis; coenzyme A biosynthesis; CoA from (R)-pantothenate: step 4/5. Functionally, reversibly transfers an adenylyl group from ATP to 4'-phosphopantetheine, yielding dephospho-CoA (dPCoA) and pyrophosphate. This is Phosphopantetheine adenylyltransferase from Allorhizobium ampelinum (strain ATCC BAA-846 / DSM 112012 / S4) (Agrobacterium vitis (strain S4)).